The primary structure comprises 515 residues: MDEFHRCGKEDSFWQQCFLYPLFFQEDLYAISHDHYLDVSSSSRPMEHLSSNDQLSFLTVKRLIGQIRQQNHSIVLFVNCDPNPLADRKKSFYSESVLEALTLVLEVPFSIWSKSSVEGMNESKSFRSIHSIFPFLEDKFPHSNSILDARIPYSIHPEILVRTFRRWIRDAPSLHPLRSVLYEYRNSPDNLQRSIIVVPRVNTRFFLFLWNYYVCECESILFSRLKRSSHSRSLSHGSFPHRTHFHRKIKHIIIFSRRNSLKSIWSLKDPKIHYVRYGERPIIAIKGAHLLVKKCRYYLLIFRQFYFHLWSEPYRVCSHQLSKNCSSSPGYFLRVRMNPILVRTKMLDELFIADLITDEIDPIVPIVPIIGLLATEKFCDISGRPISKLSWTSLTDDDILDRFDQIWRNLFHYYSGSFDRDGLYRIKYILSLSCAKTLACKHKSTIRVVRKELGPELFKKSFSKEREFYSLRFSSKAAARSQRERIWHSDIPQINPLANSWQKIQDLKIENLFDQ.

Belongs to the intron maturase 2 family. MatK subfamily.

Its subcellular location is the plastid. It is found in the chloroplast. Its function is as follows. Usually encoded in the trnK tRNA gene intron. Probably assists in splicing its own and other chloroplast group II introns. In Pinus elliottii (Slash pine), this protein is Maturase K.